Reading from the N-terminus, the 100-residue chain is Urease subunit gamma (100 aa).

The protein belongs to the urease gamma subunit family. Heterotrimer of UreA (gamma), UreB (beta) and UreC (alpha) subunits. Three heterotrimers associate to form the active enzyme.

The protein resides in the cytoplasm. It carries out the reaction urea + 2 H2O + H(+) = hydrogencarbonate + 2 NH4(+). It functions in the pathway nitrogen metabolism; urea degradation; CO(2) and NH(3) from urea (urease route): step 1/1. The polypeptide is Urease subunit gamma (Mycolicibacterium vanbaalenii (strain DSM 7251 / JCM 13017 / BCRC 16820 / KCTC 9966 / NRRL B-24157 / PYR-1) (Mycobacterium vanbaalenii)).